Here is a 336-residue protein sequence, read N- to C-terminus: 3-isopropylmalate dehydrogenase (336 aa).

The substrate site is built by arginine 87, arginine 97, arginine 121, and aspartate 211. Positions 211, 235, and 239 each coordinate Mg(2+). 271-283 is an NAD(+) binding site; the sequence is GSAPDIAGQGIAD.

It belongs to the isocitrate and isopropylmalate dehydrogenases family. LeuB type 2 subfamily. As to quaternary structure, homodimer. The cofactor is Mg(2+). Mn(2+) is required as a cofactor.

The protein resides in the cytoplasm. It carries out the reaction (2R,3S)-3-isopropylmalate + NAD(+) = 4-methyl-2-oxopentanoate + CO2 + NADH. It participates in amino-acid biosynthesis; L-leucine biosynthesis; L-leucine from 3-methyl-2-oxobutanoate: step 3/4. Its function is as follows. Catalyzes the oxidation of 3-carboxy-2-hydroxy-4-methylpentanoate (3-isopropylmalate) to 3-carboxy-4-methyl-2-oxopentanoate. The product decarboxylates to 4-methyl-2 oxopentanoate. The sequence is that of 3-isopropylmalate dehydrogenase from Mycobacterium sp. (strain JLS).